We begin with the raw amino-acid sequence, 640 residues long: MTAAPTAGGVVTSGVGVAGVGVGLLGMFGPVRVVHVGWLLPLSGVHIELDRLGGFFMALTGAVAAPVGCYLIGYVRREHLGRVPMAVVPLFVAAMLLVPAAGSVTTFLLAWELMAIASLILVLSEHARPQVRSAGLWYAVMTQLGFIAILVGLVVLAAAGGSDRFAGLGAVCDGVRAAVFMLTLVGFGSKAGLVPLHAWLPRAHPEAPSPVSALMSAAMVNLGIYGIVRFDLQLLGPGPRWWGLALLAVGGTSALYGVLQASVAADLKRLLAYSTTENMGLITLALGAATLFADTGAYGPASIAAAAAMLHMIAHAAFKSLAFMAAGSVLAATGLRDLDLLGGLARRMPATTVFFGVAALGACGLPLGAGFVSEWLLVQSLIHAAPGHDPIVALTTPLAVGVVALATGLSVAAMTKAFGIGFLARPRSTQAEAAREAPASMRAGMAIAAGACLVLAVAPLLVAPMVRRAAATLPAAQAVKFTGLGAVVRLPAMSGSIAPGVIAAAVLAAALAVAVLARWRFRRRPAPARLPLWACGAADLTVRMQYTATSFAEPLQRVFGDVLRPDTDIEVTHTAESRYMAERITYRTAVADAIEQRLYTPVVGAVAAMAELLRRAHTGSVHRYLAYGALGVLIVLVVAR.

14 helical membrane-spanning segments follow: residues 8-28 (GGVV…LGMF), 52-72 (LGGF…CYLI), 90-110 (LFVA…FLLA), 136-156 (LWYA…LVVL), 179-199 (VFML…LHAW), 208-228 (PSPV…YGIV), 241-261 (WWGL…VLQA), 277-297 (ENMG…DTGA), 298-318 (YGPA…HAAF), 352-372 (TVFF…AGFV), 391-411 (IVAL…GLSV), 446-466 (AIAA…APMV), 497-517 (IAPG…AVLA), and 619-639 (GSVH…LVVA).

The protein belongs to the complex I subunit 4 family.

It localises to the cell membrane. This is an uncharacterized protein from Mycobacterium tuberculosis (strain CDC 1551 / Oshkosh).